Here is a 345-residue protein sequence, read N- to C-terminus: Phosphoribosylformylglycinamidine cyclo-ligase (345 aa).

This sequence belongs to the AIR synthase family.

The protein resides in the cytoplasm. The catalysed reaction is 2-formamido-N(1)-(5-O-phospho-beta-D-ribosyl)acetamidine + ATP = 5-amino-1-(5-phospho-beta-D-ribosyl)imidazole + ADP + phosphate + H(+). The protein operates within purine metabolism; IMP biosynthesis via de novo pathway; 5-amino-1-(5-phospho-D-ribosyl)imidazole from N(2)-formyl-N(1)-(5-phospho-D-ribosyl)glycinamide: step 2/2. This is Phosphoribosylformylglycinamidine cyclo-ligase from Shewanella loihica (strain ATCC BAA-1088 / PV-4).